The primary structure comprises 267 residues: Regulatory protein RecX (267 aa).

The protein belongs to the RecX family.

The protein resides in the cytoplasm. Modulates RecA activity. In Staphylococcus epidermidis (strain ATCC 12228 / FDA PCI 1200), this protein is Regulatory protein RecX.